We begin with the raw amino-acid sequence, 88 residues long: Large ribosomal subunit protein eL31 (88 aa).

It belongs to the eukaryotic ribosomal protein eL31 family.

The chain is Large ribosomal subunit protein eL31 from Saccharolobus islandicus (strain Y.N.15.51 / Yellowstone #2) (Sulfolobus islandicus).